The primary structure comprises 398 residues: Ubiquitin-like modifier-activating enzyme 5 (398 aa).

ATP contacts are provided by G76, D97, K120, N143, and N177. Zn(2+)-binding residues include C219 and C222. The Glycyl thioester intermediate role is filled by C243. Residues C296 and C301 each coordinate Zn(2+).

The protein belongs to the ubiquitin-activating E1 family. UBA5 subfamily.

E1-like enzyme which activates UFM1. In Drosophila grimshawi (Hawaiian fruit fly), this protein is Ubiquitin-like modifier-activating enzyme 5.